Reading from the N-terminus, the 156-residue chain is Ribonuclease pancreatic (156 aa).

An N-terminal signal peptide occupies residues methionine 1–glycine 28. Positions alanine 33 to serine 43 are enriched in basic and acidic residues. The tract at residues alanine 33–tyrosine 53 is disordered. Substrate is bound by residues lysine 35 and arginine 38. Histidine 40 functions as the Proton acceptor in the catalytic mechanism. Intrachain disulfides connect cysteine 54–cysteine 112, cysteine 68–cysteine 123, cysteine 86–cysteine 138, and cysteine 93–cysteine 100. Asparagine 62 is a glycosylation site (N-linked (GlcNAc...) asparagine). Residues lysine 69–threonine 73 and lysine 94 contribute to the substrate site. Asparagine 104 is a glycosylation site (N-linked (GlcNAc...) asparagine). Arginine 113 contributes to the substrate binding site. Asparagine 116 carries N-linked (GlcNAc...) asparagine glycosylation. The active-site Proton donor is the histidine 147.

Belongs to the pancreatic ribonuclease family. In terms of assembly, monomer. Interacts with and forms tight 1:1 complexes with RNH1. Dimerization of two such complexes may occur. Interaction with RNH1 inhibits this protein. In terms of tissue distribution, pancreas and other tissues and body fluids (indicating it may have other physiological functions besides its role in digestion).

It is found in the secreted. The enzyme catalyses an [RNA] containing cytidine + H2O = an [RNA]-3'-cytidine-3'-phosphate + a 5'-hydroxy-ribonucleotide-3'-[RNA].. The catalysed reaction is an [RNA] containing uridine + H2O = an [RNA]-3'-uridine-3'-phosphate + a 5'-hydroxy-ribonucleotide-3'-[RNA].. Its function is as follows. Endonuclease that catalyzes the cleavage of RNA on the 3' side of pyrimidine nucleotides. Acts on single-stranded and double-stranded RNA. This chain is Ribonuclease pancreatic (RNASE1), found in Pan troglodytes (Chimpanzee).